Reading from the N-terminus, the 2544-residue chain is Highly reducing polyketide synthase pkhB (2544 aa).

A Ketosynthase family 3 (KS3) domain is found at 9–438 (SEPIAIIGMS…GTNAHVILES (430 aa)). Residues Cys-182, His-317, and His-358 each act as for beta-ketoacyl synthase activity in the active site. Residues 566–876 (VFTGQVFRRS…PYWGCLVRDE (311 aa)) form a malonyl-CoA:ACP transacylase (MAT) domain region. Positions 948–1082 (HELLGMPVAG…GMVGIEESAV (135 aa)) are N-terminal hotdog fold. Residues 948–1252 (HELLGMPVAG…VELAALGRGS (305 aa)) form a dehydratase (DH) domain region. The PKS/mFAS DH domain occupies 948 to 1254 (HELLGMPVAG…LAALGRGSSA (307 aa)). Residue His-980 is the Proton acceptor; for dehydratase activity of the active site. The interval 1095–1254 (YTRQPNPQDL…LAALGRGSSA (160 aa)) is C-terminal hotdog fold. Residue Asp-1165 is the Proton donor; for dehydratase activity of the active site. The methyltransferase (CMet) domain stretch occupies residues 1398 to 1573 (SSLRQLSALL…FSGLDLEIYD (176 aa)). The segment at 1826-2142 (GHLGTLAFAE…TGDQMGKVVL (317 aa)) is enoyl reductase (ER) domain. The segment at 2169–2356 (ASYLIVGGVG…GVAIDLGPIS (188 aa)) is ketoreductase (KR) domain. A Carrier domain is found at 2462-2539 (EGARLIGAAI…ALAGLVAEKS (78 aa)). Residue Ser-2499 is modified to O-(pantetheine 4'-phosphoryl)serine.

Requires pantetheine 4'-phosphate as cofactor.

It participates in secondary metabolite biosynthesis. In terms of biological role, highly reducing polyketide synthase; part of the pkh gene cluster that mediates the biosynthesis of 2,4-dihydroxy-6-[(3E,5E,7E)-2-oxonona-3,5,7-trienyl]benzaldehyde. The highly reducing polyketide synthase pkhB first produces the (2E,4E,6E)-octa-2,4,6-trienyl strater unit for the non-reducing polyketide synthase pkhA. This octatrienoyl starter is then loaded onto the SAT domain of the NR-PKS pkhA to be condensed with 4 malonyl-CoA units to yield 2,4-dihydroxy-6-[(3E,5E,7E)-2-oxonona-3,5,7-trienyl]benzaldehyde. The chain is Highly reducing polyketide synthase pkhB from Emericella nidulans (strain FGSC A4 / ATCC 38163 / CBS 112.46 / NRRL 194 / M139) (Aspergillus nidulans).